We begin with the raw amino-acid sequence, 347 residues long: uncharacterized protein (347 aa).

The signal sequence occupies residues Met1–Ser21.

The protein belongs to the bacterial solute-binding protein 1 family. WtpA subfamily.

This is an uncharacterized protein from Methanococcus maripaludis (strain C5 / ATCC BAA-1333).